A 352-amino-acid polypeptide reads, in one-letter code: Macrophage-capping protein (352 aa).

Methionine 1 is modified (N-acetylmethionine). A Gelsolin-like 1 repeat occupies 27–75; sequence EKLKPVPIARESHGIFFSGDSYLVLHNGPEEASHLHLWIGQQSSRDEQG. The Nuclear localization signal motif lies at 139-148; the sequence is RKLYQVKGKK. 2 Gelsolin-like repeats span residues 150 to 190 and 265 to 311; these read IRAT…LERN and MNLT…KERQ. Serine 341 is modified (phosphoserine).

Belongs to the villin/gelsolin family. Interacts with NUP62. Interacts with NUTF2 and RAN; involved in CAPG nuclear import. Post-translationally, phosphorylated. Nuclear GCAP39 is more highly phosphorylated than cytoplasmic GCAP39. Present in a large variety of tissues and is particularly abundant in kidney and lung. Highly expressed in macrophages (at protein level).

It localises to the nucleus. The protein resides in the cytoplasm. It is found in the melanosome. Its subcellular location is the cell projection. The protein localises to the lamellipodium. It localises to the ruffle. Functionally, calcium-sensitive protein which reversibly blocks the barbed ends of actin filaments but does not sever preformed actin filaments. May play an important role in macrophage function. May play a role in regulating cytoplasmic and/or nuclear structures through potential interactions with actin. May bind DNA. Uncapping occurs either when Ca(2+) falls or when the concentration of polyphosphoinositide rises, both at low and high Ca(2+). This is Macrophage-capping protein (Capg) from Mus musculus (Mouse).